Consider the following 212-residue polypeptide: MNEPQLLIETWGQPGEIIDGVPMLESHDGKDLGLKPGLYIEGIFMQAEVVNRNKRLYPKRILEKAVKDYINEQVLTKQALGELNHPPRANVDPMQAAIIIEDMWWKGNDVYGRARVIEGDHGPGDKLAANIRAGWIPGVSSRGLGSLTDTNEGYRIVNEGFKLTVGVDAVWGPSAPDAWVTPKEITESQTAEADTSADDAYMALAEAMKKAL.

His85 is an active-site residue. Residues 117 to 136 (IEGDHGPGDKLAANIRAGWI) form a homomultimerization region. Residue Ser140 is part of the active site. The propeptide occupies 207–212 (AMKKAL).

Belongs to the peptidase U9 family. Homopentamer. Post-translationally, the self-cleavage of the N-terminus allows the activation of the protease. Probably also self-cleaved at the C-terminus in order to detach the protease from the scaffold protein and allow it to diffuse within the prohead to cleave the prohead proteins. After cleavage of the inner core of the prohead, the gp21 protease also destroys itself into small cleavage products.

Functionally, serine protease ot the inner core, which is activated by autocatalytic cleavage after completion of prohead assembly and processes many prohead proteins. These cleaved peptides from the inner core and the auto-cleaved protease escape from the capsid, thus liberating space for the phage DNA genome. Cleaves the prohead proteins after the sequence motif L/I-X-E. This is Prohead core protein protease (21) from Escherichia coli (Bacteriophage T4).